The following is a 373-amino-acid chain: T-protein (373 aa).

The Chorismate mutase domain maps to 1 to 90 (MVAELTALRD…ESYSSENDKG (90 aa)). The 263-residue stretch at 99-361 (RPVVIVGGGG…DYAQRFQSES (263 aa)) folds into the Prephenate/arogenate dehydrogenase domain.

It in the C-terminal section; belongs to the prephenate/arogenate dehydrogenase family.

It is found in the cytoplasm. It catalyses the reaction chorismate = prephenate. It carries out the reaction prephenate + NAD(+) = 3-(4-hydroxyphenyl)pyruvate + CO2 + NADH. It participates in amino-acid biosynthesis; L-tyrosine biosynthesis; (4-hydroxyphenyl)pyruvate from prephenate (NAD(+) route): step 1/1. The protein operates within metabolic intermediate biosynthesis; prephenate biosynthesis; prephenate from chorismate: step 1/1. This is T-protein (tyrA) from Escherichia coli (strain K12).